A 60-amino-acid chain; its full sequence is Large ribosomal subunit protein bL32 (60 aa).

The disordered stretch occupies residues 1–22 (MAVPARHTSKAKKNKRRTHYKL). Residues 7–20 (HTSKAKKNKRRTHY) are compositionally biased toward basic residues.

Belongs to the bacterial ribosomal protein bL32 family.

The sequence is that of Large ribosomal subunit protein bL32 from Streptococcus pyogenes serotype M3 (strain ATCC BAA-595 / MGAS315).